Consider the following 185-residue polypeptide: ATP synthase subunit b, cyanelle (185 aa).

Residues 36–58 (LINLLVIFFLLIYQGRPFFTALL) traverse the membrane as a helical segment.

The protein belongs to the ATPase B chain family. In terms of assembly, F-type ATPases have 2 components, F(1) - the catalytic core - and F(0) - the membrane proton channel. F(1) has five subunits: alpha(3), beta(3), gamma(1), delta(1), epsilon(1). F(0) has four main subunits: a(1), b(1), b'(1) and c(10-14). The alpha and beta chains form an alternating ring which encloses part of the gamma chain. F(1) is attached to F(0) by a central stalk formed by the gamma and epsilon chains, while a peripheral stalk is formed by the delta, b and b' chains.

It localises to the plastid. The protein localises to the cyanelle thylakoid membrane. In terms of biological role, f(1)F(0) ATP synthase produces ATP from ADP in the presence of a proton or sodium gradient. F-type ATPases consist of two structural domains, F(1) containing the extramembraneous catalytic core and F(0) containing the membrane proton channel, linked together by a central stalk and a peripheral stalk. During catalysis, ATP synthesis in the catalytic domain of F(1) is coupled via a rotary mechanism of the central stalk subunits to proton translocation. Its function is as follows. Component of the F(0) channel, it forms part of the peripheral stalk, linking F(1) to F(0). The sequence is that of ATP synthase subunit b, cyanelle from Cyanophora paradoxa.